The following is a 439-amino-acid chain: Glutamate--tRNA ligase 1 (439 aa).

Positions 6 to 16 (PSPTGDMHIGN) match the 'HIGH' region motif. Positions 232–236 (KMSKR) match the 'KMSKS' region motif. Lys-235 is a binding site for ATP.

The protein belongs to the class-I aminoacyl-tRNA synthetase family. Glutamate--tRNA ligase type 1 subfamily. In terms of assembly, monomer.

It is found in the cytoplasm. The enzyme catalyses tRNA(Glu) + L-glutamate + ATP = L-glutamyl-tRNA(Glu) + AMP + diphosphate. Catalyzes the attachment of glutamate to tRNA(Glu) in a two-step reaction: glutamate is first activated by ATP to form Glu-AMP and then transferred to the acceptor end of tRNA(Glu). This is Glutamate--tRNA ligase 1 from Helicobacter acinonychis (strain Sheeba).